Consider the following 354-residue polypeptide: Probable L-ascorbate-6-phosphate lactonase UlaG (354 aa).

It belongs to the UlaG family. A divalent metal cation is required as a cofactor.

Its subcellular location is the cytoplasm. It catalyses the reaction L-ascorbate 6-phosphate + H2O = 3-dehydro-L-gulonate 6-phosphate. The protein operates within cofactor degradation; L-ascorbate degradation; D-xylulose 5-phosphate from L-ascorbate: step 1/4. Functionally, probably catalyzes the hydrolysis of L-ascorbate-6-P into 3-keto-L-gulonate-6-P. Is essential for L-ascorbate utilization under anaerobic conditions. The protein is Probable L-ascorbate-6-phosphate lactonase UlaG of Escherichia coli O139:H28 (strain E24377A / ETEC).